The following is a 233-amino-acid chain: Large ribosomal subunit protein uL1 (233 aa).

It belongs to the universal ribosomal protein uL1 family. In terms of assembly, part of the 50S ribosomal subunit.

Its function is as follows. Binds directly to 23S rRNA. The L1 stalk is quite mobile in the ribosome, and is involved in E site tRNA release. Functionally, protein L1 is also a translational repressor protein, it controls the translation of the L11 operon by binding to its mRNA. In Polynucleobacter necessarius subsp. necessarius (strain STIR1), this protein is Large ribosomal subunit protein uL1.